An 847-amino-acid chain; its full sequence is KN motif and ankyrin repeat domain-containing protein 2 (847 aa).

A disordered region spans residues 1–32 (MAQVLHVPAPFPGTPGQASSAAFPNKEPDPPY). The tract at residues 1–72 (MAQVLHVPAP…PVQRRPRLGS (72 aa)) is interaction with AIFM1. Phosphoserine is present on residues serine 19, serine 83, serine 86, serine 89, and serine 92. An Omega-N-methylarginine modification is found at arginine 105. The disordered stretch occupies residues 161–182 (LAGVGLLPPTPRSSGLSTPVAP). At threonine 170 the chain carries Phosphothreonine. 2 coiled-coil regions span residues 187–207 (LAHV…LEEQ) and 284–311 (EAAL…AQTQ). Threonine 331 is subject to Phosphothreonine. The residue at position 358 (serine 358) is a Phosphoserine. Disordered stretches follow at residues 414–473 (GAAR…GGAS) and 502–581 (NGGY…PEEE). Over residues 420-433 (DPPPSPAEPSPSSP) the composition is skewed to pro residues. Composition is skewed to low complexity over residues 434 to 446 (YPAA…APAA) and 506 to 516 (ESSSEDSSTAE). Serine 536 bears the Phosphoserine mark. One copy of the ANK 0; degenerate repeat lies at 610–647 (RELKVAYTTVLQEWLRLACRSDAHPELVRRHLVTFRAM). 5 ANK repeats span residues 662–692 (NGNT…QVDK), 696–729 (AGYS…NVNA), 734–763 (AGQT…DVNM), 767–797 (DGST…DISL), and 801–831 (DGST…KCSF). The interaction with NCOA1 stretch occupies residues 665 to 831 (TALHYSVSHA…YSRMNIKCSF (167 aa)).

As to quaternary structure, interacts (non-phosphorylated form) with NCOA1; NCOA2 AND NCOA3. Interacts with AIFM1. Interacts with ARHGDIA; the interaction is direct and may regulate the interaction of ARHGDIA with RHOA, RAC1 and CDC42. Interacts (via ANK repeats 1-5) with KIF21A. Post-translationally, phosphorylated by casein kinase II upon estrogen stimulation. Phosphorylation induces the release by KANK2 of NCOA1 and its translocation to the nucleus where NCOA1 can activate gene transcription. Expressed by podocytes in kidney glomeruli (at protein level).

It localises to the cytoplasm. The protein resides in the mitochondrion. Involved in transcription regulation by sequestering in the cytoplasm nuclear receptor coactivators such as NCOA1, NCOA2 and NCOA3. Involved in regulation of caspase-independent apoptosis by sequestering the proapoptotic factor AIFM1 in mitochondria. Pro-apoptotic stimuli can induce its proteasomal degradation allowing the translocation of AIFM1 to the nucleus to induce apoptosis. Involved in the negative control of vitamin D receptor signaling pathway. Involved in actin stress fibers formation through its interaction with ARHGDIA and the regulation of the Rho signaling pathway. May thereby play a role in cell adhesion and migration, regulating for instance podocytes migration during development of the kidney. Through the Rho signaling pathway may also regulate cell proliferation. This chain is KN motif and ankyrin repeat domain-containing protein 2, found in Rattus norvegicus (Rat).